Consider the following 465-residue polypeptide: Tyrosine 3-monooxygenase (465 aa).

Fe cation contacts are provided by His-294, His-299, and Glu-339.

It belongs to the biopterin-dependent aromatic amino acid hydroxylase family. Requires Fe(2+) as cofactor.

The protein localises to the cytoplasm. Its subcellular location is the perinuclear region. The enzyme catalyses (6R)-L-erythro-5,6,7,8-tetrahydrobiopterin + L-tyrosine + O2 = (4aS,6R)-4a-hydroxy-L-erythro-5,6,7,8-tetrahydrobiopterin + L-dopa. It functions in the pathway catecholamine biosynthesis; dopamine biosynthesis; dopamine from L-tyrosine: step 1/2. The chain is Tyrosine 3-monooxygenase (TH) from Schistosoma mansoni (Blood fluke).